The following is a 316-amino-acid chain: Peptidoglycan hydrolase FlgJ (316 aa).

The interval 151–316 is catalytic; sequence DSKDFLARLS…TYSANLDNLF (166 aa). Active-site residues include Glu-223 and Asp-248.

In the N-terminal section; belongs to the FlgJ family. The protein in the C-terminal section; belongs to the glycosyl hydrolase 73 family.

It is found in the periplasm. Flagellum-specific muramidase which hydrolyzes the peptidoglycan layer to assemble the rod structure in the periplasmic space. In Salmonella typhimurium (strain LT2 / SGSC1412 / ATCC 700720), this protein is Peptidoglycan hydrolase FlgJ (flgJ).